The chain runs to 585 residues: Arginine--tRNA ligase (585 aa).

The 'HIGH' region motif lies at 126–136 (PNIAKEMHVGH).

It belongs to the class-I aminoacyl-tRNA synthetase family. Monomer.

It localises to the cytoplasm. The catalysed reaction is tRNA(Arg) + L-arginine + ATP = L-arginyl-tRNA(Arg) + AMP + diphosphate. The sequence is that of Arginine--tRNA ligase from Picosynechococcus sp. (strain ATCC 27264 / PCC 7002 / PR-6) (Agmenellum quadruplicatum).